Here is a 205-residue protein sequence, read N- to C-terminus: MPLIPMVVEQSNRGERAYDIYSRLLKDRIIFLGSAMDDEVANLIVAQLLFLESEDPEKDINFYINSPGGVVTAGMAVYDTMQYIKPDVATVCIGQAASMGALLLAAGAKGKRFSLPNSRIMIHQPLGGAQGQASDIKIQANEILRMKEVLSGILSKHTGQNFDKISEDTDRDFFMSGDQAKEYGLVDHVVASRDELEKAEAAKEK.

The active-site Nucleophile is the Ser98. The active site involves His123.

Belongs to the peptidase S14 family. In terms of assembly, fourteen ClpP subunits assemble into 2 heptameric rings which stack back to back to give a disk-like structure with a central cavity, resembling the structure of eukaryotic proteasomes.

It is found in the cytoplasm. It catalyses the reaction Hydrolysis of proteins to small peptides in the presence of ATP and magnesium. alpha-casein is the usual test substrate. In the absence of ATP, only oligopeptides shorter than five residues are hydrolyzed (such as succinyl-Leu-Tyr-|-NHMec, and Leu-Tyr-Leu-|-Tyr-Trp, in which cleavage of the -Tyr-|-Leu- and -Tyr-|-Trp bonds also occurs).. Its function is as follows. Cleaves peptides in various proteins in a process that requires ATP hydrolysis. Has a chymotrypsin-like activity. Plays a major role in the degradation of misfolded proteins. The sequence is that of ATP-dependent Clp protease proteolytic subunit from Desulforapulum autotrophicum (strain ATCC 43914 / DSM 3382 / VKM B-1955 / HRM2) (Desulfobacterium autotrophicum).